Reading from the N-terminus, the 288-residue chain is Beta-lactamase PSE-1 (288 aa).

An N-terminal signal peptide occupies residues 1–17; that stretch reads MKFLLAFSLLIPSVVFA. The active-site Acyl-ester intermediate is serine 65. A disulfide bridge connects residues cysteine 72 and cysteine 118. Substrate is bound at residue 229-231; the sequence is RSG.

The protein belongs to the class-A beta-lactamase family. As to quaternary structure, monomer.

The enzyme catalyses a beta-lactam + H2O = a substituted beta-amino acid. With respect to regulation, inhibited by p-chloromercuribenzoate but not by cloxacillin. Hydrolyzes penicillin, ampicillin and carbenicillin but not other antibiotics including oxacillin, methicillin and cloxacillin. This is Beta-lactamase PSE-1 from Pseudomonas aeruginosa.